The following is a 144-amino-acid chain: Ribosomal RNA large subunit methyltransferase H (144 aa).

S-adenosyl-L-methionine contacts are provided by residues G92 and 111–116 (LSPMTF).

The protein belongs to the RNA methyltransferase RlmH family. As to quaternary structure, homodimer.

The protein localises to the cytoplasm. It carries out the reaction pseudouridine(1915) in 23S rRNA + S-adenosyl-L-methionine = N(3)-methylpseudouridine(1915) in 23S rRNA + S-adenosyl-L-homocysteine + H(+). Specifically methylates the pseudouridine at position 1915 (m3Psi1915) in 23S rRNA. In Synechococcus sp. (strain CC9311), this protein is Ribosomal RNA large subunit methyltransferase H.